Here is a 267-residue protein sequence, read N- to C-terminus: Probable 3-methyl-2-oxobutanoate hydroxymethyltransferase (267 aa).

This sequence belongs to the PanB family.

It carries out the reaction 3-methyl-2-oxobutanoate + (6R)-5,10-methylene-5,6,7,8-tetrahydrofolate + H2O = 2-dehydropantoate + (6S)-5,6,7,8-tetrahydrofolate. The protein operates within cofactor biosynthesis; (R)-pantothenate biosynthesis; (R)-pantoate from 3-methyl-2-oxobutanoate: step 1/2. This is Probable 3-methyl-2-oxobutanoate hydroxymethyltransferase from Schizosaccharomyces pombe (strain 972 / ATCC 24843) (Fission yeast).